Consider the following 998-residue polypeptide: DNA damage-induced apoptosis suppressor protein (998 aa).

Positions 815 to 834 are disordered; it reads DKQQASPSCPKNIKTPSQKI. Residues 817–834 are compositionally biased toward polar residues; sequence QQASPSCPKNIKTPSQKI.

Highly expressed in colorectal and lung cancer tissues.

The protein localises to the cytoplasm. The protein resides in the nucleus. Functionally, may be an anti-apoptotic protein involved in DNA repair or cell survival. This Homo sapiens (Human) protein is DNA damage-induced apoptosis suppressor protein (DDIAS).